A 141-amino-acid polypeptide reads, in one-letter code: Large ribosomal subunit protein bL17 (141 aa).

Belongs to the bacterial ribosomal protein bL17 family. Part of the 50S ribosomal subunit. Contacts protein L32.

This chain is Large ribosomal subunit protein bL17, found in Sinorhizobium fredii (strain NBRC 101917 / NGR234).